Consider the following 717-residue polypeptide: UvrABC system protein C (717 aa).

In terms of domain architecture, GIY-YIG spans 16–95; it reads DAPGVYRFHD…IKEYDPRFNV (80 aa). In terms of domain architecture, UVR spans 208-243; that stretch reads DTLIRKLDREMRQASEELEFERAARLRDDLEALRRA. Disordered regions lie at residues 517–555 and 696–717; these read TAAG…GRPR and HAAL…GESQ. Composition is skewed to basic and acidic residues over residues 541–553 and 707–717; these read EAER…ETGR and ESRDNAEGESQ.

This sequence belongs to the UvrC family. In terms of assembly, interacts with UvrB in an incision complex.

It is found in the cytoplasm. Its function is as follows. The UvrABC repair system catalyzes the recognition and processing of DNA lesions. UvrC both incises the 5' and 3' sides of the lesion. The N-terminal half is responsible for the 3' incision and the C-terminal half is responsible for the 5' incision. This is UvrABC system protein C from Saccharopolyspora erythraea (strain ATCC 11635 / DSM 40517 / JCM 4748 / NBRC 13426 / NCIMB 8594 / NRRL 2338).